The following is a 267-amino-acid chain: Hydroxynaphthalene reductase-like protein Arp2 (267 aa).

NADP(+)-binding residues include Ile-25, Asn-45, Asp-71, and Asn-98. Catalysis depends on proton donor residues Ser-147 and Ser-148. Residues Tyr-162, Lys-166, Val-195, and Thr-197 each contribute to the NADP(+) site. Tyr-162 serves as the catalytic Proton acceptor. Lys-166 acts as the Lowers pKa of active site Tyr in catalysis.

This sequence belongs to the short-chain dehydrogenases/reductases (SDR) family.

Hydroxynaphthalene reductase-like protein; part of the Pks2 gene cluster that mediates the formation of infectious structures (appressoria), enabling these fungi to kill insects faster. The product of the Pks2 gene cluster is different from the one of Pks1 and has still not been identified. The chain is Hydroxynaphthalene reductase-like protein Arp2 from Metarhizium brunneum (strain ARSEF 3297).